The primary structure comprises 65 residues: Antimicrobial peptide THP1 (65 aa).

The signal sequence occupies residues 1-25 (MRIVYLLFPFILLLAQGAAGSSLAL). 3 disulfide bridges follow: Cys-31/Cys-53, Cys-38/Cys-59, and Cys-43/Cys-60. The propeptide occupies 61–65 (KTLLG).

This sequence belongs to the beta-defensin family.

The protein localises to the secreted. In terms of biological role, bactericidal activity; inhibits S.aureus and E.coli. The polypeptide is Antimicrobial peptide THP1 (Meleagris gallopavo (Wild turkey)).